Reading from the N-terminus, the 66-residue chain is Phylloseptin-S6 (66 aa).

Positions Met1 to Cys22 are cleaved as a signal peptide. The propeptide occupies Glu23–Arg46. Positions Glu25–Glu44 are disordered. The span at Glu30–Lys41 shows a compositional bias: acidic residues. The residue at position 65 (Leu65) is a Leucine amide.

The protein belongs to the frog skin active peptide (FSAP) family. Phylloseptin subfamily. In terms of tissue distribution, expressed by the skin glands.

Its subcellular location is the secreted. It is found in the target cell membrane. Antimicrobial peptide with high activity against Gram-positive bacteria, low activity against Gram-negative bacteria, and moderate activity against fungi. Acts by causing bacterial membrane disruption inducing leakage of the intracellular content followed by cell death. It adopts an alpha-helical amphipathic structure in membrane environments. Also shows highly potent antiparasitic activity against Leishmania species. Shows moderate hemolytic activity on human erythrocytes. Is also active on human monocytes. This is Phylloseptin-S6 from Phyllomedusa sauvagei (Sauvage's leaf frog).